A 311-amino-acid polypeptide reads, in one-letter code: Heme A synthase (311 aa).

At 1–6 (MQRFIK) the chain is on the cytoplasmic side. A helical membrane pass occupies residues 7 to 27 (WLAVITSLDLLIVLLGGALVT). Residues 28 to 62 (KTGSGQGCGKSWPLCNGEFVPSNLSMETIIELSHR) are Extracellular-facing. Residues C35 and C42 are joined by a disulfide bond. E58 is a catalytic residue. H61 contacts heme o. The helical transmembrane segment at 63–83 (LTSGSAGILVTLLCILSWKYY) threads the bilayer. At 84–91 (KHVRETKT) the chain is on the cytoplasmic side. The helical transmembrane segment at 92 to 112 (LAILSFVFLVAQALMGAAAVV) threads the bilayer. Residues 113–121 (WGQMPAVLA) lie on the Extracellular side of the membrane. The chain crosses the membrane as a helical span at residues 122–142 (IHFGISLISFASVILLTCLIF). Residue H123 participates in heme o binding. At 143–159 (EIDQKFDARSLIMDKKM) the chain is on the cytoplasmic side. The helical transmembrane segment at 160 to 180 (KFHIYGVTIYCYLVVYTGALV) threads the bilayer. The Extracellular portion of the chain corresponds to 181–211 (RHERASLACPDFPLCSKNRPMPTQLHEWVQM). A disulfide bond links C189 and C195. A helical membrane pass occupies residues 212 to 232 (GHRLAAMLIFVWILYAMILAI). H213 is a binding site for heme b. At 233–243 (RHYKQQPVVYW) the chain is on the cytoplasmic side. A helical membrane pass occupies residues 244–264 (GWIISFILVTLQAIVGILVVF). Over 265-271 (TNASLAM) the chain is Extracellular. A helical transmembrane segment spans residues 272-292 (ALLHSLFISCLFAVLCYLVML). A heme b-binding site is contributed by H275. The Cytoplasmic segment spans residues 293–311 (GTRSKVNAKEAASTSKQTK).

The protein belongs to the COX15/CtaA family. Type 1 subfamily. In terms of assembly, interacts with CtaB. Requires heme b as cofactor.

Its subcellular location is the cell membrane. It catalyses the reaction Fe(II)-heme o + 2 A + H2O = Fe(II)-heme a + 2 AH2. Its pathway is porphyrin-containing compound metabolism; heme A biosynthesis; heme A from heme O: step 1/1. Functionally, catalyzes the conversion of heme O to heme A by two successive hydroxylations of the methyl group at C8. The first hydroxylation forms heme I, the second hydroxylation results in an unstable dihydroxymethyl group, which spontaneously dehydrates, resulting in the formyl group of heme A. This Bacillus cereus (strain 03BB102) protein is Heme A synthase.